We begin with the raw amino-acid sequence, 3946 residues long: Hybrid PKS-NRPS synthetase lepA (3946 aa).

Residues 9-440 (VEPIAIVGSA…GTNAHVILEG (432 aa)) form the Ketosynthase family 3 (KS3) domain. Catalysis depends on for beta-ketoacyl synthase activity residues cysteine 183, histidine 320, and histidine 363. A malonyl-CoA:ACP transacylase (MAT) domain region spans residues 553–871 (IFTGQGAQWA…PYAGIMRRAT (319 aa)). Residues 945–1073 (HELLGRRAPD…GRLILFKGEG (129 aa)) form an N-terminal hotdog fold region. Residues 945–1238 (HELLGRRAPD…RLQSFTEAKA (294 aa)) form a dehydratase (DH) domain region. Positions 945–1239 (HELLGRRAPD…LQSFTEAKAL (295 aa)) constitute a PKS/mFAS DH domain. Histidine 977 functions as the Proton acceptor; for dehydratase activity in the catalytic mechanism. Positions 1088 to 1239 (LSPLDREMFY…LQSFTEAKAL (152 aa)) are C-terminal hotdog fold. Aspartate 1147 (proton donor; for dehydratase activity) is an active-site residue. Residues 1380–1580 (LLNRFYTDGR…ATVSDLPSDG (201 aa)) are methyltransferase (MT) domain. The ketoreductase (KR) domain stretch occupies residues 2093–2266 (TYWMIGLNSE…AASVIDIGLV (174 aa)). Residues 2352 to 2365 (SSQDSDQSNSTSAS) are compositionally biased toward low complexity. Residues 2352 to 2372 (SSQDSDQSNSTSASIRDQVSS) are disordered. Residues 2378–2455 (EGTDVLLRCF…EICAEAIQKF (78 aa)) enclose the Carrier 1 domain. The residue at position 2415 (serine 2415) is an O-(pantetheine 4'-phosphoryl)serine. The segment at 2474-2531 (KQATASPPEIGREEAQSTSRAGILPTDQDNDNSSDSESQRKSGASSSSGSGTRTPTSI) is disordered. Residues 2508–2530 (DSESQRKSGASSSSGSGTRTPTS) show a composition bias toward low complexity. Positions 2547–2976 (PMSYAQSRLW…MQIQDGLLND (430 aa)) are condensation (C) domain. The interval 3000–3402 (FSQRAATDAN…GGLIFMGRLD (403 aa)) is adenylation (A) (KR) domain. Residues 3492–3511 (GKVDRKALQDKPLPTEPDSS) form a disordered region. Residues 3515 to 3594 (EALSLAEGEL…RMATLIDAEK (80 aa)) enclose the Carrier 2 domain. At serine 3554 the chain carries O-(pantetheine 4'-phosphoryl)serine. Residues 3633–3833 (LTGSTGFLGM…RFSVLMKVVP (201 aa)) are reductase (RED) domain.

This sequence in the C-terminal section; belongs to the NRP synthetase family.

Hybrid PKS-NRPS synthetase; part of the gene cluster 23 that mediates the biosynthesis of a family of 2-pyridones known as leporins. The hybrid PKS-NRPS synthetase lepA and the enoyl reductase lepG are responsible for fusion of phenylalanine with a hexaketide and subsequent release of the stable tetramic acid precursor, pre-leporin C. Because lepA lacks a designated enoylreductase (ER) domain, the required activity is provided the enoyl reductase lepG. It is possible that the dehydrogenase lepF also participates in production of pre-leporin C. Cytochrome P450 monooxygenase lepH is then required for the ring expansion step to yield leporin C. Leporin C is then presumably further oxidized by the N-hydroxylase lepD to form leporin B. LepI may possess a function in biosynthesis upstream of lepA. Leporin B is further oxidized in the presence of ferric ion to give the leporin B trimer-iron chelate, but whether or not this reaction is catalyzed by an enzyme in the pathway or by ferric ion is not determined yet. This is Hybrid PKS-NRPS synthetase lepA from Aspergillus flavus (strain ATCC 200026 / FGSC A1120 / IAM 13836 / NRRL 3357 / JCM 12722 / SRRC 167).